Here is a 403-residue protein sequence, read N- to C-terminus: S-adenosylmethionine synthase (403 aa).

His-17 lines the ATP pocket. Asp-19 contacts Mg(2+). Glu-45 is a binding site for K(+). Glu-58 and Gln-104 together coordinate L-methionine. Residues 104-114 form a flexible loop region; the sequence is QSPDIAQGVDT. ATP is bound by residues 179-181, 250-251, Asp-259, 265-266, Ala-282, and Lys-286; these read DGK, KF, and RK. Residue Asp-259 participates in L-methionine binding. Lys-290 contacts L-methionine.

Belongs to the AdoMet synthase family. As to quaternary structure, homotetramer; dimer of dimers. It depends on Mg(2+) as a cofactor. K(+) is required as a cofactor.

The protein localises to the cytoplasm. It carries out the reaction L-methionine + ATP + H2O = S-adenosyl-L-methionine + phosphate + diphosphate. The protein operates within amino-acid biosynthesis; S-adenosyl-L-methionine biosynthesis; S-adenosyl-L-methionine from L-methionine: step 1/1. Catalyzes the formation of S-adenosylmethionine (AdoMet) from methionine and ATP. The overall synthetic reaction is composed of two sequential steps, AdoMet formation and the subsequent tripolyphosphate hydrolysis which occurs prior to release of AdoMet from the enzyme. The protein is S-adenosylmethionine synthase of Mycobacterium bovis (strain BCG / Pasteur 1173P2).